A 629-amino-acid polypeptide reads, in one-letter code: tRNA uridine 5-carboxymethylaminomethyl modification enzyme MnmG (629 aa).

13-18 contributes to the FAD binding site; sequence GGGHAG. 273–287 contributes to the NAD(+) binding site; sequence GPRYCPSIEDKIHRF.

This sequence belongs to the MnmG family. Homodimer. Heterotetramer of two MnmE and two MnmG subunits. FAD is required as a cofactor.

The protein localises to the cytoplasm. Its function is as follows. NAD-binding protein involved in the addition of a carboxymethylaminomethyl (cmnm) group at the wobble position (U34) of certain tRNAs, forming tRNA-cmnm(5)s(2)U34. This is tRNA uridine 5-carboxymethylaminomethyl modification enzyme MnmG from Shewanella baltica (strain OS195).